Consider the following 490-residue polypeptide: Transcription factor MYB101 (490 aa).

Residues 1–21 (MDGGGETTATATMEGRGLKKG) form a disordered region. HTH myb-type domains follow at residues 15–67 (GRGL…ANHL) and 68–122 (RPNL…KRRQ). DNA-binding regions (H-T-H motif) lie at residues 43-67 (WNAV…ANHL) and 95-118 (WARM…NTRM). The tract at residues 168–206 (YTNSSNTSSSSSSFSSSSSQPSKRLRPDPLVSTNPGLNP) is disordered. Residues 169-186 (TNSSNTSSSSSSFSSSSS) are compositionally biased toward low complexity.

As to expression, present mostly in flowers, siliques and floral shoot tips. Expression is restricted to the subapical pith cells of both vegetative and flowering plants and to the hypocotyl hook. Expressed in pollen grains and pollen tube. Mostly expressed in mature pollen grains, and, to a lower extent, in inflorescences and siliques.

Its subcellular location is the nucleus. Functionally, transcription activator. Binds to 5'-CAACTGTC-3' and/or 5'-TAACAAA-3' motif in target gene promoter (e.g. alpha-amylase) to promote their expression. Positive regulator of abscisic acid (ABA) responses leading to growth arrest during seed germination. Promotes the expression of aleurone-related genes (e.g. CP1, CP, GASA1, BXL1 and BXL2) in seeds. Together with MYB33 and MYB65, promotes the programmed cell death (PCD) leading to vacuolation of protein storage vacuoles (PSVs) in the aleurone layers during seed germination. Maybe involved in the regulation of leaves lamina morphogenesis. Involved in pollen grain development. Together with MYB97 and MYB120, functions as a male factor that controls pollen tube-synergid interaction in fertilization. Required for pollen tube growth arrest and sperm cell release in the female gametophyte, probably via the regulation of pollen tube-specific gene expression. The polypeptide is Transcription factor MYB101 (Arabidopsis thaliana (Mouse-ear cress)).